The sequence spans 406 residues: High mobility group nucleosome-binding domain-containing protein 5 (406 aa).

The segment at 1–406 (MPKRKAAGDV…GEKEEPLSIV (406 aa)) is disordered. T29 carries the post-translational modification Phosphothreonine. Residues 35–44 (KRASTSRKTK) are compositionally biased toward basic residues. Composition is skewed to basic and acidic residues over residues 63-72 (TKPEDVKDEC), 92-101 (MEAEEVKEQI), 110-126 (GEKKEAVAAEAKDDELK), 136-159 (EDGKEHKDTGEEVEDGKIEEEGLN), and 166-187 (KSEDAEVSKDEEEKGDNEKGED). K64 participates in a covalent cross-link: Glycyl lysine isopeptide (Lys-Gly) (interchain with G-Cter in SUMO2). A Glycyl lysine isopeptide (Lys-Gly) (interchain with G-Cter in SUMO1); alternate cross-link involves residue K98. K98 is covalently cross-linked (Glycyl lysine isopeptide (Lys-Gly) (interchain with G-Cter in SUMO2); alternate). K121 participates in a covalent cross-link: Glycyl lysine isopeptide (Lys-Gly) (interchain with G-Cter in SUMO2). A compositionally biased stretch (acidic residues) spans 188–200 (GKEEGDEKEEEKD). 4 stretches are compositionally biased toward basic and acidic residues: residues 201–239 (DKEGDTGTEKEVKEQNKEAEEDDGKCKEEENKEVGKEGQ), 246–266 (EDLHEEVGKEDLHEEDGKEGQ), 272–284 (KEIHHEEDGKEGQ), and 290–311 (KEYLHEEDGEEGQPKEDQKEGQ). The segment covering 312–325 (PEEDGKEDQPEEDG) has biased composition (acidic residues). Residues 326–365 (KEGQCKEDGKEGHHEEGGKEDLHEEDGKEKDGGKEDRKEE) show a composition bias toward basic and acidic residues. Acidic residues predominate over residues 366–376 (GEQEVAVDEGS). Residues 377 to 406 (DENKVEAEEEGAENKDFKQDGEKEEPLSIV) show a composition bias toward basic and acidic residues.

The protein belongs to the HMGN family. Expressed in liver, spleen, lung, heart, kidney, muscle and brain (at protein level). Widely expressed with highest levels in submaxillary gland, thymus, kidney and liver and lowest levels in brain, lung, pancreas and eye.

Its subcellular location is the nucleus. Its function is as follows. Preferentially binds to euchromatin and modulates cellular transcription by counteracting linker histone-mediated chromatin compaction. The chain is High mobility group nucleosome-binding domain-containing protein 5 (Hmgn5) from Mus musculus (Mouse).